The following is a 513-amino-acid chain: Cytochrome P450 monooxygenase eqxH (513 aa).

The chain crosses the membrane as a helical span at residues 13–32 (QYAILCGITVFTLFIVQLSL). N-linked (GlcNAc...) asparagine glycosylation is found at asparagine 130 and asparagine 295. Cysteine 449 lines the heme pocket.

It belongs to the cytochrome P450 family. It depends on heme as a cofactor.

The protein localises to the membrane. It functions in the pathway mycotoxin biosynthesis. Cytochrome P450 monooxygenase; part of the gene cluster that mediates the biosynthesis of equisetin, a trans-fused decalin-containing tetramic acid with antimicrobial activity. The PKS module of eqxS together with the enoylreductase eqxC catalyze the formation of the polyketide unit which is then conjugated to L-serine by the condensation domain of the eqxS NRPS module. Activity of the Dieckmann cyclase domain (RED) results in release of the Dieckmann product intermediate. Diels-Alderase eqx3 is involved in endo-selective Diels-Alder cycloaddition to form the decalin ring, leading to the production of N-desmethylequisetin also called trichosetin. Subsequent N-methylation is carried out by eqxD to give equisetin. This is Cytochrome P450 monooxygenase eqxH from Fusarium heterosporum.